Consider the following 388-residue polypeptide: GDP-4-keto-6-deoxy-D-mannose 3-dehydratase (388 aa).

Position 26–29 (26–29 (KMFT)) interacts with GDP-4-dehydro-alpha-D-rhamnose. A helical membrane pass occupies residues 49 to 69 (YAVMVSSGSTANLLMIAALFF). Residues 56–57 (GS), Trp88, Glu162, and Ser183 each bind pyridoxal 5'-phosphate. His188 (proton donor/acceptor) is an active-site residue. Position 215 (His215) interacts with L-glutamate. Arg219 contacts GDP-4-dehydro-alpha-D-rhamnose. Asn248 is a binding site for pyridoxal 5'-phosphate. Arg250 is a binding site for L-glutamate. Glu329 provides a ligand contact to GDP-4-dehydro-alpha-D-rhamnose.

It belongs to the DegT/DnrJ/EryC1 family. As to quaternary structure, homodimer. Pyridoxal 5'-phosphate serves as cofactor.

The protein resides in the cell membrane. It carries out the reaction GDP-4-dehydro-alpha-D-rhamnose + L-glutamate = GDP-4-dehydro-3,6-dideoxy-alpha-D-mannose + 2-oxoglutarate + NH4(+). The protein operates within nucleotide-sugar metabolism; GDP-L-colitose biosynthesis. Its function is as follows. Involved in the biosynthesis of L-colitose, a 3,6-dideoxyhexose present in the O-antigen region of lipopolysaccharides (LPS), where it serves as an antigenic determinant and is vital for bacterial defense and survival. Catalyzes the removal of the C3'-hydroxyl group from GDP-4-keto-6-deoxy-D-mannose via a combined transamination-deoxygenation reaction. The catalysis is initiated by a transamination step in which pyridoxal 5'-phosphate (PLP) is converted to pyridoxamine 5'-phosphate (PMP) in the presence of L-glutamate. This coenzyme then forms a Schiff base with GDP-4-keto-6-deoxy-D-mannose and the resulting adduct undergoes a PMP-mediated beta-dehydration reaction to give a sugar enamine intermediate, which after tautomerization and hydrolysis to release ammonia yields GDP-4-keto-3,6-dideoxy-D-mannose as a product. In vitro, is able to catalyze the formation of GDP-4-keto-3,6-dideoxymannose using GDP-perosamine rather than GDP-4-keto-6-deoxymannose as a substrate, with no need of glutamate. The sequence is that of GDP-4-keto-6-deoxy-D-mannose 3-dehydratase from Escherichia coli O55:H7 (strain CB9615 / EPEC).